Consider the following 342-residue polypeptide: Tetraacyldisaccharide 4'-kinase (342 aa).

An ATP-binding site is contributed by 56–63; the sequence is TAGGAGKT.

This sequence belongs to the LpxK family.

It carries out the reaction a lipid A disaccharide + ATP = a lipid IVA + ADP + H(+). The protein operates within glycolipid biosynthesis; lipid IV(A) biosynthesis; lipid IV(A) from (3R)-3-hydroxytetradecanoyl-[acyl-carrier-protein] and UDP-N-acetyl-alpha-D-glucosamine: step 6/6. In terms of biological role, transfers the gamma-phosphate of ATP to the 4'-position of a tetraacyldisaccharide 1-phosphate intermediate (termed DS-1-P) to form tetraacyldisaccharide 1,4'-bis-phosphate (lipid IVA). The chain is Tetraacyldisaccharide 4'-kinase from Parvibaculum lavamentivorans (strain DS-1 / DSM 13023 / NCIMB 13966).